A 149-amino-acid polypeptide reads, in one-letter code: Nucleoside diphosphate kinase (149 aa).

Lys9, Phe57, Arg85, Thr91, Arg102, and Asn112 together coordinate ATP. The Pros-phosphohistidine intermediate role is filled by His115.

This sequence belongs to the NDK family. The cofactor is Mg(2+).

It is found in the cytoplasm. It catalyses the reaction a 2'-deoxyribonucleoside 5'-diphosphate + ATP = a 2'-deoxyribonucleoside 5'-triphosphate + ADP. The enzyme catalyses a ribonucleoside 5'-diphosphate + ATP = a ribonucleoside 5'-triphosphate + ADP. Major role in the synthesis of nucleoside triphosphates other than ATP. The ATP gamma phosphate is transferred to the NDP beta phosphate via a ping-pong mechanism, using a phosphorylated active-site intermediate. The chain is Nucleoside diphosphate kinase from Methanocorpusculum labreanum (strain ATCC 43576 / DSM 4855 / Z).